The chain runs to 376 residues: N-acetyldiaminopimelate deacetylase (376 aa).

D69 is a catalytic residue. Catalysis depends on E128, which acts as the Proton acceptor.

Belongs to the peptidase M20A family. N-acetyldiaminopimelate deacetylase subfamily.

It carries out the reaction N-acetyl-(2S,6S)-2,6-diaminopimelate + H2O = (2S,6S)-2,6-diaminopimelate + acetate. The protein operates within amino-acid biosynthesis; L-lysine biosynthesis via DAP pathway; LL-2,6-diaminopimelate from (S)-tetrahydrodipicolinate (acetylase route): step 3/3. In terms of biological role, catalyzes the conversion of N-acetyl-diaminopimelate to diaminopimelate and acetate. This is N-acetyldiaminopimelate deacetylase from Streptococcus pneumoniae (strain Hungary19A-6).